Reading from the N-terminus, the 591-residue chain is Transcription factor COE1-A (591 aa).

Positions 63–66 are interaction with DNA; it reads RKSN. The segment at 151–170 adopts a C5-type zinc-finger fold; that stretch reads CRVLLTHEIMCSRCCDKKSC. Interaction with DNA regions lie at residues 197–204 and 236–239; these read NCLKNAGN and NNSK. The region spanning 262 to 344 is the IPT/TIG domain; that stretch reads PCIKAISPSE…CKGTPGRFIY (83 aa). Polar residues predominate over residues 454-466; that stretch reads ANQGFSRNTSSVS. Residues 454-484 form a disordered region; that stretch reads ANQGFSRNTSSVSPHGYVPSTTPQQSSYSTV. The segment covering 471-484 has biased composition (low complexity); that stretch reads VPSTTPQQSSYSTV.

The protein belongs to the COE family. Forms either a homodimer or a heterodimer with a related family member. In terms of tissue distribution, detected in B cells.

It is found in the nucleus. Its function is as follows. Transcriptional activator. In Danio rerio (Zebrafish), this protein is Transcription factor COE1-A.